A 601-amino-acid chain; its full sequence is Nuclear receptor subfamily 2 group C member 1 (601 aa).

The tract at residues 1–179 is required for interaction with KAT2B; that stretch reads MATIEEIAHQ…RLQRCIAFGM (179 aa). Positions 111–186 form a DNA-binding region, nuclear receptor; sequence FDLCVVCGDK…FGMKQDSVQC (76 aa). 2 NR C4-type zinc fingers span residues 114–134 and 150–169; these read CVVCGDKASGRHYGAVTCEGC and CRGSKDCIINKHHRNRCQYC. A phosphoserine mark is found at Ser198 and Ser216. Thr221 bears the Phosphothreonine mark. Position 223 is a phosphothreonine; by MAPK1 (Thr223). Residue Lys251 forms a Glycyl lysine isopeptide (Lys-Gly) (interchain with G-Cter in SUMO); alternate linkage. Lys251 participates in a covalent cross-link: Glycyl lysine isopeptide (Lys-Gly) (interchain with G-Cter in SUMO2); alternate. Residues 349–591 form the NR LBD domain; sequence GSVHLITGDS…SVIPHILKME (243 aa). Ser582 is modified (phosphoserine; by PKC). The segment at 585 to 601 is required for interaction with NRIP1; sequence PHILKMEPGQYSKTSSL. Lys589 is covalently cross-linked (Glycyl lysine isopeptide (Lys-Gly) (interchain with G-Cter in SUMO2)).

It belongs to the nuclear hormone receptor family. NR2 subfamily. In terms of assembly, homodimer. Heterodimer; with NR2C2 which is required for chromatin remodeling and for binding to promoter regions such as globin DR1 repeats. Interacts with ESR1; the interaction prevents homodimerization of ESR1 and suppresses its transcriptional activity and cell growth. Interacts with NRIP1 (via its LXXLL motifs); the interaction provides corepressor activity. Interacts with HDAC3 (via the DNA-binding domain); the interaction recruits phosphorylated NR2C1 to PML bodies for sumoylation. Interacts with HDAC4 (via the DNA-binding domain). Interacts with PIAS1; the interaction is required for sumoylation of NR2C1. Interacts with UBE2I; the interaction is required for sumoylation of NR2C1. Interacts with KAT2B; the interaction acts as a corepressor of gene expression. Sumoylation requires both PIAS1 and UBE2I. Sumoylation appears to dissociate NR2C1 from the PML nuclear bodies. Enhances the interaction with NRIP1 but inhibits interaction with KAT2B. In proliferating cells, stimulation by all-trans retinoic acid, activation of MAPK1-mediated phosphorylation and recruitment to PML bodies with subsequent sumoylation, suppresses OCT4 expression. Post-translationally, phosphorylated on several serine and threonine residues. Phosphorylation on Thr-223, stimulated by all-trans retinoic acid (atRA) mediates PML location and sumoylation in proliferating cells which then modulates its association with effector molecules, KAT2B and NRIP1. Phosphorylation on Ser-582 by PKC is important for protein stability and function as activator of RARB.

It is found in the nucleus. The protein localises to the PML body. Orphan nuclear receptor. Binds the IR7 element in the promoter of its own gene in an autoregulatory negative feedback mechanism. Primarily repressor of a broad range of genes including ESR1 and RARB. Together with NR2C2, forms the core of the DRED (direct repeat erythroid-definitive) complex that represses embryonic and fetal globin transcription. Binds to hormone response elements (HREs) consisting of two 5'-AGGTCA-3' half site direct repeat consensus sequences. Also activator of OCT4 gene expression. Plays a fundamental role in early embryogenesis and regulates embryonic stem cell proliferation and differentiation. Mediator of retinoic acid-regulated preadipocyte proliferation. The sequence is that of Nuclear receptor subfamily 2 group C member 1 (NR2C1) from Pongo abelii (Sumatran orangutan).